A 592-amino-acid chain; its full sequence is Putative amidase ARB_02965 (592 aa).

A signal peptide spans 1–21 (MKGPITFLLQLGAVYTSIASA). A glycan (N-linked (GlcNAc...) asparagine) is linked at N120. K161 functions as the Charge relay system in the catalytic mechanism. N217 carries N-linked (GlcNAc...) asparagine glycosylation. Residue S242 is the Charge relay system of the active site. Substrate-binding positions include S242 and 263 to 266 (TSGS). S266 functions as the Acyl-ester intermediate in the catalytic mechanism. N-linked (GlcNAc...) asparagine glycosylation is found at N326, N430, and N528.

Belongs to the amidase family.

It is found in the secreted. The chain is Putative amidase ARB_02965 from Arthroderma benhamiae (strain ATCC MYA-4681 / CBS 112371) (Trichophyton mentagrophytes).